A 986-amino-acid chain; its full sequence is Bifunctional glutamine synthetase adenylyltransferase/adenylyl-removing enzyme (986 aa).

Residues 1–482 (MVTTVISNVK…RYGRLFAGEE (482 aa)) form an adenylyl removase region. The segment at 486 to 986 (SRFGSLVFTG…RAAYEAVVKG (501 aa)) is adenylyl transferase.

The protein belongs to the GlnE family. The cofactor is Mg(2+).

It catalyses the reaction [glutamine synthetase]-O(4)-(5'-adenylyl)-L-tyrosine + phosphate = [glutamine synthetase]-L-tyrosine + ADP. The catalysed reaction is [glutamine synthetase]-L-tyrosine + ATP = [glutamine synthetase]-O(4)-(5'-adenylyl)-L-tyrosine + diphosphate. Its function is as follows. Involved in the regulation of glutamine synthetase GlnA, a key enzyme in the process to assimilate ammonia. When cellular nitrogen levels are high, the C-terminal adenylyl transferase (AT) inactivates GlnA by covalent transfer of an adenylyl group from ATP to specific tyrosine residue of GlnA, thus reducing its activity. Conversely, when nitrogen levels are low, the N-terminal adenylyl removase (AR) activates GlnA by removing the adenylyl group by phosphorolysis, increasing its activity. The regulatory region of GlnE binds the signal transduction protein PII (GlnB) which indicates the nitrogen status of the cell. The polypeptide is Bifunctional glutamine synthetase adenylyltransferase/adenylyl-removing enzyme (Caulobacter vibrioides (strain ATCC 19089 / CIP 103742 / CB 15) (Caulobacter crescentus)).